The sequence spans 676 residues: UvrABC system protein B (676 aa).

In terms of domain architecture, Helicase ATP-binding spans 26 to 414 (EGLDAGLAHQ…SAGEIADQVV (389 aa)). Residue 39–46 (GVTGSGKT) participates in ATP binding. Positions 92 to 115 (YYDYYQPEAYVPTTDTFIEKDSSV) match the Beta-hairpin motif. Positions 432 to 598 (QVDDLLSEIR…ALKRNIKDIM (167 aa)) constitute a Helicase C-terminal domain. A UVR domain is found at 636 to 671 (EKEITKLEAQMYKHAQDLEFELAAQKRDEIEKLRQQ).

This sequence belongs to the UvrB family. As to quaternary structure, forms a heterotetramer with UvrA during the search for lesions. Interacts with UvrC in an incision complex.

It is found in the cytoplasm. In terms of biological role, the UvrABC repair system catalyzes the recognition and processing of DNA lesions. A damage recognition complex composed of 2 UvrA and 2 UvrB subunits scans DNA for abnormalities. Upon binding of the UvrA(2)B(2) complex to a putative damaged site, the DNA wraps around one UvrB monomer. DNA wrap is dependent on ATP binding by UvrB and probably causes local melting of the DNA helix, facilitating insertion of UvrB beta-hairpin between the DNA strands. Then UvrB probes one DNA strand for the presence of a lesion. If a lesion is found the UvrA subunits dissociate and the UvrB-DNA preincision complex is formed. This complex is subsequently bound by UvrC and the second UvrB is released. If no lesion is found, the DNA wraps around the other UvrB subunit that will check the other stand for damage. This chain is UvrABC system protein B, found in Vibrio vulnificus (strain CMCP6).